The sequence spans 341 residues: L-threonine 3-dehydrogenase (341 aa).

Residue Cys38 participates in Zn(2+) binding. Residues Thr40 and His43 each act as charge relay system in the active site. Residues His63, Glu64, Cys93, Cys96, Cys99, and Cys107 each coordinate Zn(2+). Residues Ile175, Asp195, Arg200, 262 to 264 (LGI), and 286 to 287 (IY) contribute to the NAD(+) site.

This sequence belongs to the zinc-containing alcohol dehydrogenase family. Homotetramer. Requires Zn(2+) as cofactor.

It is found in the cytoplasm. The catalysed reaction is L-threonine + NAD(+) = (2S)-2-amino-3-oxobutanoate + NADH + H(+). Its pathway is amino-acid degradation; L-threonine degradation via oxydo-reductase pathway; glycine from L-threonine: step 1/2. Its function is as follows. Catalyzes the NAD(+)-dependent oxidation of L-threonine to 2-amino-3-ketobutyrate. The chain is L-threonine 3-dehydrogenase from Shewanella pealeana (strain ATCC 700345 / ANG-SQ1).